A 179-amino-acid polypeptide reads, in one-letter code: Probable chorismate pyruvate-lyase (179 aa).

Substrate contacts are provided by R82, L120, and E165.

It belongs to the UbiC family.

Its subcellular location is the cytoplasm. It catalyses the reaction chorismate = 4-hydroxybenzoate + pyruvate. The protein operates within cofactor biosynthesis; ubiquinone biosynthesis. Functionally, removes the pyruvyl group from chorismate, with concomitant aromatization of the ring, to provide 4-hydroxybenzoate (4HB) for the ubiquinone pathway. The chain is Probable chorismate pyruvate-lyase from Vibrio vulnificus (strain CMCP6).